The primary structure comprises 364 residues: MSNDLKKTPLYDRFVESNAKIVEFGGWAMPVQFSSIKEEHNAVREVMGIFDVSHMGEVLIEGKDASDFIQYILSNDTDQLTDNKAQYTALCNDKGGIIDDLITYKLDNQKYLLVVNAANTEKDYNWINSHSENFDVKVENVSDQYGQLAVQGPEARDYVGSLVDVDVSEMKPFDFKKDVTIFGKNIILSQSGYTGEDGFEIYCNSDDVVDIWDGLLENENLVPAGLGARDTLRLEAGLPLHGQDLSEDITPYEGGIAFAAKPLIEADFIGKEVLKEQKENGSAERTIGLEMLDKGIPRTGYDVLDLDGNKIGVVTSGTQSPATGKGIALAIINRDEFEMGREVLVQIRKRQVKAKIVKKNQISK.

Belongs to the GcvT family. The glycine cleavage system is composed of four proteins: P, T, L and H.

It catalyses the reaction N(6)-[(R)-S(8)-aminomethyldihydrolipoyl]-L-lysyl-[protein] + (6S)-5,6,7,8-tetrahydrofolate = N(6)-[(R)-dihydrolipoyl]-L-lysyl-[protein] + (6R)-5,10-methylene-5,6,7,8-tetrahydrofolate + NH4(+). Its function is as follows. The glycine cleavage system catalyzes the degradation of glycine. This Staphylococcus carnosus (strain TM300) protein is Aminomethyltransferase.